A 156-amino-acid polypeptide reads, in one-letter code: Peptide deformylase 1 (156 aa).

Fe cation contacts are provided by Cys-90 and His-132. Glu-133 is a catalytic residue. His-136 contacts Fe cation.

Belongs to the polypeptide deformylase family. Fe(2+) serves as cofactor.

The enzyme catalyses N-terminal N-formyl-L-methionyl-[peptide] + H2O = N-terminal L-methionyl-[peptide] + formate. Functionally, removes the formyl group from the N-terminal Met of newly synthesized proteins. Requires at least a dipeptide for an efficient rate of reaction. N-terminal L-methionine is a prerequisite for activity but the enzyme has broad specificity at other positions. In Bacillus cereus (strain ATCC 14579 / DSM 31 / CCUG 7414 / JCM 2152 / NBRC 15305 / NCIMB 9373 / NCTC 2599 / NRRL B-3711), this protein is Peptide deformylase 1.